Consider the following 217-residue polypeptide: Thiamine-phosphate synthase (217 aa).

4-amino-2-methyl-5-(diphosphooxymethyl)pyrimidine contacts are provided by residues 41 to 45 (QYRDK) and Asn76. Residues Asp77 and Asp96 each coordinate Mg(2+). Ser115 provides a ligand contact to 4-amino-2-methyl-5-(diphosphooxymethyl)pyrimidine. Residue 142-144 (SPS) coordinates 2-[(2R,5Z)-2-carboxy-4-methylthiazol-5(2H)-ylidene]ethyl phosphate. Residue Lys145 coordinates 4-amino-2-methyl-5-(diphosphooxymethyl)pyrimidine. 2-[(2R,5Z)-2-carboxy-4-methylthiazol-5(2H)-ylidene]ethyl phosphate contacts are provided by residues Gly172 and 192–193 (IS).

Belongs to the thiamine-phosphate synthase family. Requires Mg(2+) as cofactor.

It catalyses the reaction 2-[(2R,5Z)-2-carboxy-4-methylthiazol-5(2H)-ylidene]ethyl phosphate + 4-amino-2-methyl-5-(diphosphooxymethyl)pyrimidine + 2 H(+) = thiamine phosphate + CO2 + diphosphate. It carries out the reaction 2-(2-carboxy-4-methylthiazol-5-yl)ethyl phosphate + 4-amino-2-methyl-5-(diphosphooxymethyl)pyrimidine + 2 H(+) = thiamine phosphate + CO2 + diphosphate. The catalysed reaction is 4-methyl-5-(2-phosphooxyethyl)-thiazole + 4-amino-2-methyl-5-(diphosphooxymethyl)pyrimidine + H(+) = thiamine phosphate + diphosphate. Its pathway is cofactor biosynthesis; thiamine diphosphate biosynthesis; thiamine phosphate from 4-amino-2-methyl-5-diphosphomethylpyrimidine and 4-methyl-5-(2-phosphoethyl)-thiazole: step 1/1. Condenses 4-methyl-5-(beta-hydroxyethyl)thiazole monophosphate (THZ-P) and 2-methyl-4-amino-5-hydroxymethyl pyrimidine pyrophosphate (HMP-PP) to form thiamine monophosphate (TMP). This is Thiamine-phosphate synthase from Acidithiobacillus ferrooxidans (strain ATCC 23270 / DSM 14882 / CIP 104768 / NCIMB 8455) (Ferrobacillus ferrooxidans (strain ATCC 23270)).